The chain runs to 343 residues: NAD-dependent deacetylase sir2E (343 aa).

The Deacetylase sirtuin-type domain maps to 27–300 (YLKNKKEFEF…PLLERQLLYE (274 aa)). Residue His-152 is the Proton acceptor of the active site. 4 residues coordinate Zn(2+): Cys-160, Cys-165, Cys-200, and Cys-203.

This sequence belongs to the sirtuin family.

Its subcellular location is the nucleus. The catalysed reaction is N(6)-acetyl-L-lysyl-[protein] + NAD(+) + H2O = 2''-O-acetyl-ADP-D-ribose + nicotinamide + L-lysyl-[protein]. NAD-dependent deacetylase, which plays an important role in the regulation of transcriptional repression. May play a role in cell cycle. When overexpressed, the cell cycle is accelerated. The protein is NAD-dependent deacetylase sir2E (sir2E) of Dictyostelium discoideum (Social amoeba).